A 331-amino-acid chain; its full sequence is tRNA(Ile)-lysidine synthase (331 aa).

29-34 (SGGPDS) serves as a coordination point for ATP.

This sequence belongs to the tRNA(Ile)-lysidine synthase family.

It is found in the cytoplasm. It carries out the reaction cytidine(34) in tRNA(Ile2) + L-lysine + ATP = lysidine(34) in tRNA(Ile2) + AMP + diphosphate + H(+). In terms of biological role, ligates lysine onto the cytidine present at position 34 of the AUA codon-specific tRNA(Ile) that contains the anticodon CAU, in an ATP-dependent manner. Cytidine is converted to lysidine, thus changing the amino acid specificity of the tRNA from methionine to isoleucine. The chain is tRNA(Ile)-lysidine synthase from Chlorobaculum tepidum (strain ATCC 49652 / DSM 12025 / NBRC 103806 / TLS) (Chlorobium tepidum).